The chain runs to 1465 residues: MAPMHEEDCKLEASAVSDSGSFAASRARREKKSKKGRQEALERLKKAKAGEKYKYEVEDLTSVYEEVDEEQYSKLVQARQDDDWIVDDDGIGYVEDGREIFDDDLEDDALDTCGKGSDGKAHRKDRKDVKKPSVTKPNNIKAMFIASAGKKTTDKAVDLSKDDLLGDILQDLNTETAQITPPPVLIPKKKRSTGALLNPFSVHTPKAIPSGKPASPVLRNEPLLTPIPLKRAELAGELAQPECPEDEQELGVMEFEDGDFDESMDTEKVDEKPVTAKTWDQETEPVERVEHEADPERGTTSYLENFLPDVSCWDIDQDDESIPQEVQVDSSNLPLVKGADDEQVFQFYWLDAYEDPYNQPGVVFLFGKVWIESVKTHVSCCVMVKNIERTLYFLPREMKFDLNTGKETAIPVTMKDVYEEFDSKISAKYKIMKFKSKIVEKNYAFEIPDVPEKSEYLEVRYSAEVPQLPQNLKGETFSHVFGTNTSSLELFLMNRKIKGPCWLEVKNPQLLNQPISWCKFEVMALKPDLVNVIKDVSPPPLVVMSFSMKTMQNVQNHQHEIIAMAALVHHSFALDKAPPEPPFQTHFCVVSKPKDCIFPCDFKEVISKKNMKVEIAATERTLIGFFLAKVHKIDPDILVGHNICSFELEVLLQRINECKVPYWSKIGRLRRSNMPKLGSRSGFGERNATCGRMICDVEISAKELIHCKSYHLSELVQQILKTERIVIPTENIRNMYSESSYLLYLLEHIWKDARFILQIMCELNVLPLALQITNIAGNIMSRTLMGGRSERNEFLLLHAFYENNYIVPDKQIFRKPQQKLGDEDEEIDGDTNKYKKGRKKATYAGGLVLDPKVGFYDKFILLLDFNSLYPSIIQEFNICFTTVQRVTSEVQKATEDEEQEQIPELPDPNLEMGILPREIRKLVERRKQVKQLMKQQDLNPDLVLQYDIRQKALKLTANSMYGCLGFSYSRFYAKPLAALVTYKGREILMHTKDMVQKMNLEVIYGDTDSIMINTNSTNLEEVFKLGNKVKSEVNKLYKLLEIDIDAVFKSLLLLKKKKYAALVVEPTSDGNYITKQELKGLDIVRRDWCDLAKDTGNFVIGQILSDQSRDTIVENIQKRLIEIGENVLNGSVPVSQFEINKALTKDPQDYPDRKSLPHVHVALWINSQGGRKVKAGDTVSYVICQDGSNLTATQRAYAPEQLQKLDNLAIDTQYYLAQQIHPVVARICEPIDGIDAVLIALWLGLDSTQFRVHQYHKDEENDALLGGPAQLTDEEKYKDCEKFKCLCPSCGTENIYDNVFEGSGLDMEPSLYRCSNVDCKVSPLTFMVQLSNKLIMDIRRCIKKYYDGWLICEEPTCCSRLRRLPLHFSRNGPLCPVCMKAVLRPEYSDKSLYTQLCFYRYIFDADCALEKLTEHEKDKLKKQFFPLRVLQDYRKVKNIAEQFLSWSGYSEVNLSKLFANYAGKS.

Disordered stretches follow at residues 20-39 (GSFAASRARREKKSKKGRQE) and 105-135 (LEDDALDTCGKGSDGKAHRKDRKDVKKPSVT). Basic residues predominate over residues 26-35 (RARREKKSKK). Threonine 180 carries the phosphothreonine modification. Serine 192 and serine 215 each carry phosphoserine. Residue lysine 230 is modified to N6-acetyllysine. The segment at 261 to 297 (DESMDTEKVDEKPVTAKTWDQETEPVERVEHEADPER) is disordered. Basic and acidic residues-rich tracts occupy residues 265–274 (DTEKVDEKPV) and 285–297 (PVERVEHEADPER). The interval 654–719 (RINECKVPYW…YHLSELVQQI (66 aa)) is DNA-binding. An N6-succinyllysine modification is found at lysine 974. The interval 1249 to 1380 (QFRVHQYHKD…NGPLCPVCMK (132 aa)) is DNA-binding. Zn(2+) contacts are provided by cysteine 1287, cysteine 1290, cysteine 1314, cysteine 1319, cysteine 1352, cysteine 1357, cysteine 1375, and cysteine 1378. The segment at 1287-1317 (CPSCGTENIYDNVFEGSGLDMEPSLYRCSNV) adopts a CysA-type zinc-finger fold. The CysB motif motif lies at 1352-1378 (CEEPTCCSRLRRLPLHFSRNGPLCPVC).

It belongs to the DNA polymerase type-B family. Component of the alpha DNA polymerase complex (also known as the alpha DNA polymerase-primase complex) consisting of four subunits: the catalytic subunit POLA1, the regulatory subunit POLA2, and the primase complex subunits PRIM1 and PRIM2 respectively. Within the complex, POLA1 directly interacts with PRIM2. Interacts with PARP1; this interaction functions as part of the control of replication fork progression. Interacts with MCM10 and WDHD1; these interactions recruit the polymerase alpha complex to the pre-replicative complex bound to DNA. Interacts with RPA1; this interaction stabilizes the replicative complex and reduces the misincorporation rate of DNA polymerase alpha by acting as a fidelity clamp. Expressed in those zones containing proliferating cells in the developing embryonic neocortex, as well as in the lateral and medial ganglionic eminences. After birth, expressed in cells that remain proliferating in the ventricular and subventricular zone of the striatum.

It is found in the nucleus. Its subcellular location is the cytoplasm. The protein localises to the cytosol. It catalyses the reaction DNA(n) + a 2'-deoxyribonucleoside 5'-triphosphate = DNA(n+1) + diphosphate. Catalytic subunit of the DNA polymerase alpha complex (also known as the alpha DNA polymerase-primase complex) which plays an essential role in the initiation of DNA synthesis. During the S phase of the cell cycle, the DNA polymerase alpha complex (composed of a catalytic subunit POLA1, a regulatory subunit POLA2 and two primase subunits PRIM1 and PRIM2) is recruited to DNA at the replicative forks via direct interactions with MCM10 and WDHD1. The primase subunit of the polymerase alpha complex initiates DNA synthesis by oligomerising short RNA primers on both leading and lagging strands. These primers are initially extended by the polymerase alpha catalytic subunit and subsequently transferred to polymerase delta and polymerase epsilon for processive synthesis on the lagging and leading strand, respectively. The reason this transfer occurs is because the polymerase alpha has limited processivity and lacks intrinsic 3' exonuclease activity for proofreading error, and therefore is not well suited for replicating long complexes. In the cytosol, responsible for a substantial proportion of the physiological concentration of cytosolic RNA:DNA hybrids, which are necessary to prevent spontaneous activation of type I interferon responses. In Mus musculus (Mouse), this protein is DNA polymerase alpha catalytic subunit (Pola1).